The primary structure comprises 481 residues: NADH-quinone oxidoreductase subunit N (481 aa).

14 helical membrane passes run 11–31, 38–58, 69–89, 107–127, 128–148, 162–182, 203–223, 237–257, 271–291, 299–319, 327–347, 370–390, 401–421, and 457–477; these read AIPE…DLFW, LAAV…VFEM, FVLD…VLMV, VFVL…GGSL, LSVY…VAFY, FVLG…LYGL, LVLV…LGAA, PTVV…ALII, WQQI…VIAI, MLAY…VAGT, FFYT…ILLV, YAFL…TVGF, VAAG…IGAF, and LALL…FYAM.

This sequence belongs to the complex I subunit 2 family. As to quaternary structure, NDH-1 is composed of 14 different subunits. Subunits NuoA, H, J, K, L, M, N constitute the membrane sector of the complex.

Its subcellular location is the cell inner membrane. The enzyme catalyses a quinone + NADH + 5 H(+)(in) = a quinol + NAD(+) + 4 H(+)(out). In terms of biological role, NDH-1 shuttles electrons from NADH, via FMN and iron-sulfur (Fe-S) centers, to quinones in the respiratory chain. The immediate electron acceptor for the enzyme in this species is believed to be ubiquinone. Couples the redox reaction to proton translocation (for every two electrons transferred, four hydrogen ions are translocated across the cytoplasmic membrane), and thus conserves the redox energy in a proton gradient. The sequence is that of NADH-quinone oxidoreductase subunit N from Acidithiobacillus ferrooxidans (strain ATCC 23270 / DSM 14882 / CIP 104768 / NCIMB 8455) (Ferrobacillus ferrooxidans (strain ATCC 23270)).